A 278-amino-acid chain; its full sequence is 1-acyl-sn-glycerol-3-phosphate acyltransferase beta (278 aa).

A signal peptide spans 1–23; sequence MDPWPWLTAALLLLLLLVQLSRT. Topologically, residues 24-29 are lumenal; it reads ARFYAK. Residues 30–50 traverse the membrane as a helical segment; it reads VGLYCVLCLSFSAAASIVCLL. The Cytoplasmic segment spans residues 51–121; sequence RHGGRTVDNM…PKRCVQIAKR (71 aa). An HXXXXD motif motif is present at residues 98–103; it reads HQSILD. A helical membrane pass occupies residues 122–142; sequence ELMFTGPVGLIMYLGGVYFIN. Residues 143–278 lie on the Lumenal side of the membrane; it reads RQQARTAMSV…IKEPGVLPAQ (136 aa). The EGTR motif motif lies at 172 to 175; that stretch reads EGTR.

It belongs to the 1-acyl-sn-glycerol-3-phosphate acyltransferase family. Expressed at high levels in the liver, at intermediate levels in the kidney, gut, heart and skeletal muscles. Undetectable in brain and spleen.

Its subcellular location is the endoplasmic reticulum membrane. It carries out the reaction a 1-acyl-sn-glycero-3-phosphate + an acyl-CoA = a 1,2-diacyl-sn-glycero-3-phosphate + CoA. The enzyme catalyses 1-(9Z-octadecenoyl)-sn-glycero-3-phosphate + (9Z)-octadecenoyl-CoA = 1,2-di-(9Z-octadecenoyl)-sn-glycero-3-phosphate + CoA. The catalysed reaction is 1-(9Z-octadecenoyl)-sn-glycero-3-phosphate + hexadecanoyl-CoA = 1-(9Z)-octadecenoyl-2-hexadecanoyl-sn-glycero-3-phosphate + CoA. It catalyses the reaction heptadecanoyl-CoA + 1-(9Z-octadecenoyl)-sn-glycero-3-phosphate = 1-(9Z)-octadecenoyl-2-heptadecanoyl-sn-glycero-3-phosphate + CoA. It carries out the reaction 1-(9Z-octadecenoyl)-sn-glycero-3-phosphate + (9Z,12Z)-octadecadienoyl-CoA = 1-(9Z)-octadecenoyl-2-(9Z,12Z)-octadecadienoyl-sn-glycero-3-phosphate + CoA. The enzyme catalyses 1-(9Z-octadecenoyl)-sn-glycero-3-phosphate + tetradecanoyl-CoA = 1-(9Z)-octadecenoyl-2-tetradecanoyl-sn-glycero-3-phosphate + CoA. The catalysed reaction is pentadecanoyl-CoA + 1-(9Z-octadecenoyl)-sn-glycero-3-phosphate = 1-(9Z)-octadecenoyl-2-pentadecanoyl-sn-glycero-3-phosphate + CoA. It catalyses the reaction 1-hexadecanoyl-sn-glycero-3-phosphate + (9Z)-octadecenoyl-CoA = 1-hexadecanoyl-2-(9Z-octadecenoyl)-sn-glycero-3-phosphate + CoA. It carries out the reaction 1-tetradecanoyl-sn-glycerol 3-phosphate + (9Z)-octadecenoyl-CoA = 1-tetradecanoyl-2-(9Z)-octadecenoyl-sn-glycero-3-phosphate + CoA. The enzyme catalyses 1-(9Z,12Z,15Z)-octadecatrienoyl-sn-glycero-3-phosphate + (9Z)-octadecenoyl-CoA = 1-(9Z,12Z,15Z)-octadecatrienoyl-2-(9Z)-octadecenoyl-sn-glycero-3-phosphate + CoA. The catalysed reaction is 1-(6Z,9Z,12Z-octadecatrienoyl)-sn-glycero-3-phosphate + (9Z)-octadecenoyl-CoA = (6Z,9Z,12Z)-octadecatrienoyl-2-(9Z)-octadecenoyl-sn-glycero-3-phosphate + CoA. It catalyses the reaction 1-eicosanoyl-sn-glycero-3-phosphate + (9Z)-octadecenoyl-CoA = 1-eicosanoyl-2-(9Z)-octadecenoyl-sn-glycero-3-phosphate + CoA. It carries out the reaction 1-hexadecanoyl-sn-glycero-3-phosphate + octadecanoyl-CoA = 1-hexadecanoyl-2-octadecanoyl-sn-glycero-3-phosphate + CoA. The enzyme catalyses 1-hexadecanoyl-sn-glycero-3-phosphate + (5Z,8Z,11Z,14Z)-eicosatetraenoyl-CoA = 1-hexadecanoyl-2-(5Z,8Z,11Z,14Z-eicosatetraenoyl)-sn-glycero-3-phosphate + CoA. The catalysed reaction is 1-hexadecanoyl-sn-glycero-3-phosphate + hexadecanoyl-CoA = 1,2-dihexadecanoyl-sn-glycero-3-phosphate + CoA. It catalyses the reaction 1-hexadecanoyl-sn-glycero-3-phosphate + tetradecanoyl-CoA = 1-hexadecanoyl-2-tetradecanoyl-sn-glycero-3-phosphate + CoA. It carries out the reaction (11Z)-octadecenoyl-CoA + 1-(9Z-octadecenoyl)-sn-glycero-3-phosphate = 1-(9Z)-octadecenoyl-2-(11Z)-octadecenoyl-sn-glycero-3-phosphate + CoA. Its pathway is phospholipid metabolism; CDP-diacylglycerol biosynthesis; CDP-diacylglycerol from sn-glycerol 3-phosphate: step 2/3. Functionally, converts 1-acyl-sn-glycerol-3-phosphate (lysophosphatidic acid or LPA) into 1,2-diacyl-sn-glycerol-3-phosphate (phosphatidic acid or PA) by incorporating an acyl moiety at the sn-2 position of the glycerol backbone. The chain is 1-acyl-sn-glycerol-3-phosphate acyltransferase beta (Agpat2) from Mus musculus (Mouse).